Reading from the N-terminus, the 485-residue chain is N-succinylglutamate 5-semialdehyde dehydrogenase 2 (485 aa).

221-226 provides a ligand contact to NAD(+); that stretch reads GSAAAG. Residues E244 and C279 contribute to the active site.

The protein belongs to the aldehyde dehydrogenase family. AstD subfamily.

The enzyme catalyses N-succinyl-L-glutamate 5-semialdehyde + NAD(+) + H2O = N-succinyl-L-glutamate + NADH + 2 H(+). Its pathway is amino-acid degradation; L-arginine degradation via AST pathway; L-glutamate and succinate from L-arginine: step 4/5. Its function is as follows. Catalyzes the NAD-dependent reduction of succinylglutamate semialdehyde into succinylglutamate. This is N-succinylglutamate 5-semialdehyde dehydrogenase 2 from Caulobacter vibrioides (strain ATCC 19089 / CIP 103742 / CB 15) (Caulobacter crescentus).